A 448-amino-acid polypeptide reads, in one-letter code: UPF0053 protein sll0260 (448 aa).

One can recognise a CNNM transmembrane domain in the interval 2–203 (FSSSVELELF…AQAGMIDEAE (202 aa)). The next 4 membrane-spanning stretches (helical) occupy residues 11-31 (FFIF…IAIV), 62-82 (FLSA…AVGG), 106-126 (LSIS…GELV), and 142-162 (VAPA…LLGV). 2 consecutive CBS domains span residues 222-281 (MTPR…GQKI) and 286-345 (IVQP…NDDE).

It belongs to the UPF0053 family.

The protein localises to the cell membrane. The polypeptide is UPF0053 protein sll0260 (Synechocystis sp. (strain ATCC 27184 / PCC 6803 / Kazusa)).